A 124-amino-acid chain; its full sequence is Holo-[acyl-carrier-protein] synthase (124 aa).

2 residues coordinate Mg(2+): aspartate 7 and glutamate 55.

It belongs to the P-Pant transferase superfamily. AcpS family. The cofactor is Mg(2+).

The protein localises to the cytoplasm. It carries out the reaction apo-[ACP] + CoA = holo-[ACP] + adenosine 3',5'-bisphosphate + H(+). Transfers the 4'-phosphopantetheine moiety from coenzyme A to a Ser of acyl-carrier-protein. The sequence is that of Holo-[acyl-carrier-protein] synthase from Borreliella afzelii (strain PKo) (Borrelia afzelii).